We begin with the raw amino-acid sequence, 452 residues long: Phosphoglucosamine mutase (452 aa).

The active-site Phosphoserine intermediate is Ser-108. Residues Ser-108, Asp-247, Asp-249, and Asp-251 each coordinate Mg(2+). Position 108 is a phosphoserine (Ser-108).

The protein belongs to the phosphohexose mutase family. Mg(2+) is required as a cofactor. In terms of processing, activated by phosphorylation.

The catalysed reaction is alpha-D-glucosamine 1-phosphate = D-glucosamine 6-phosphate. Its function is as follows. Catalyzes the conversion of glucosamine-6-phosphate to glucosamine-1-phosphate. This is Phosphoglucosamine mutase from Burkholderia mallei (strain NCTC 10247).